The following is a 153-amino-acid chain: 3-dehydroquinate dehydratase (153 aa).

The active-site Proton acceptor is Y26. 3 residues coordinate substrate: N77, H83, and D90. The Proton donor role is filled by H103. Residues 104-105 and R114 contribute to the substrate site; that span reads LS.

It belongs to the type-II 3-dehydroquinase family. In terms of assembly, homododecamer.

The enzyme catalyses 3-dehydroquinate = 3-dehydroshikimate + H2O. It functions in the pathway metabolic intermediate biosynthesis; chorismate biosynthesis; chorismate from D-erythrose 4-phosphate and phosphoenolpyruvate: step 3/7. Its function is as follows. Catalyzes a trans-dehydration via an enolate intermediate. This Colwellia psychrerythraea (strain 34H / ATCC BAA-681) (Vibrio psychroerythus) protein is 3-dehydroquinate dehydratase.